Reading from the N-terminus, the 412-residue chain is Lysosomal phospholipase A and acyltransferase (412 aa).

Residues 1–33 form the signal peptide; that stretch reads MGLHLRPYRVGLLPDGLLFLLLLLMLLADPALP. A substrate-binding site is contributed by aspartate 46. Cysteine 65 and cysteine 89 are oxidised to a cystine. A glycan (N-linked (GlcNAc...) asparagine) is linked at asparagine 99. Serine 198 serves as the catalytic Acyl-ester intermediate. Serine 198 lines the Zn(2+) pocket. Methionine 199 is a substrate binding site. 2 N-linked (GlcNAc...) asparagine glycosylation sites follow: asparagine 273 and asparagine 289. The Zn(2+) site is built by aspartate 340 and cysteine 355. Residues aspartate 360 and histidine 392 each act as charge relay system in the active site. Histidine 392 serves as a coordination point for Zn(2+). A glycan (N-linked (GlcNAc...) asparagine) is linked at asparagine 398.

It belongs to the AB hydrolase superfamily. Lipase family. N-glycosylated. N-glycosylation is important for maturation of the enzyme and normal subcellular location. In terms of tissue distribution, detected in blood plasma (at protein level). Ubiquitous. Highly expressed in heart, placenta, skeletal muscle, kidney and pancreas. Detected at lower levels in spleen, thymus, prostate, testis, ovary, small intestine, colon and peripheral blood leukocytes.

The protein localises to the lysosome. The protein resides in the secreted. It localises to the membrane. The catalysed reaction is a 1,2-diacyl-sn-glycero-3-phosphocholine + H2O = a 2-acyl-sn-glycero-3-phosphocholine + a fatty acid + H(+). It catalyses the reaction 1-hexadecanoyl-2-(9Z-octadecenoyl)-sn-glycero-3-phosphocholine + H2O = 2-(9Z-octadecenoyl)-sn-glycero-3-phosphocholine + hexadecanoate + H(+). It carries out the reaction 1-hexadecanoyl-2-glutaroyl-sn-glycero-3-phosphocholine + H2O = 2-glutaroyl-sn-glycero-3-phosphocholine + hexadecanoate + H(+). The enzyme catalyses 1-hexadecanoyl-2-nonadioyl-sn-glycero-3-phosphocholine + H2O = 2-nonadioyl-sn-glycero-3-phosphocholine + hexadecanoate + H(+). The catalysed reaction is 1-hexadecanoyl-2-(5-oxopentanoyl)-sn-glycero-3-phosphocholine + H2O = 2-(5-oxopentanoyl)-sn-glycero-3-phosphocholine + hexadecanoate + H(+). It catalyses the reaction 1-hexadecanoyl-2-(9-oxononanoyl)-sn-glycero-3-phosphocholine + H2O = 2-(9-oxononanoyl)-sn-glycero-3-phosphocholine + hexadecanoate + H(+). It carries out the reaction 1,2-dihexadecanoyl-sn-glycero-3-phosphocholine + H2O = 2-hexadecanoyl-sn-glycero-3-phosphocholine + hexadecanoate + H(+). The enzyme catalyses a 1,2-diacyl-sn-glycero-3-phosphocholine + H2O = a 1-acyl-sn-glycero-3-phosphocholine + a fatty acid + H(+). The catalysed reaction is 1,2-di-(9Z-octadecenoyl)-sn-glycero-3-phosphocholine + H2O = 1-(9Z-octadecenoyl)-sn-glycero-3-phosphocholine + (9Z)-octadecenoate + H(+). It catalyses the reaction 1-hexadecanoyl-2-(9Z-octadecenoyl)-sn-glycero-3-phosphocholine + H2O = 1-hexadecanoyl-sn-glycero-3-phosphocholine + (9Z)-octadecenoate + H(+). It carries out the reaction 1,2-dihexadecanoyl-sn-glycero-3-phosphocholine + H2O = 1-hexadecanoyl-sn-glycero-3-phosphocholine + hexadecanoate + H(+). The enzyme catalyses a 1-acyl-sn-glycero-3-phosphocholine + H2O = sn-glycerol 3-phosphocholine + a fatty acid + H(+). The catalysed reaction is 1-hexadecanoyl-sn-glycero-3-phosphocholine + H2O = sn-glycerol 3-phosphocholine + hexadecanoate + H(+). It catalyses the reaction N-(acetyl)-sphing-4-enine + a 1,2-diacyl-sn-glycero-3-phosphoethanolamine = 1-O-acyl-N-(acetyl)-sphing-4-enine + a 2-acyl-sn-glycero-3-phosphoethanolamine. It carries out the reaction 1-hexadecanoyl-2-(9Z-octadecenoyl)-sn-glycero-3-phosphoethanolamine + N-(acetyl)-sphing-4-enine = 2-(9Z-octadecenoyl)-sn-glycero-3-phosphoethanolamine + 1-hexadecanoyl-N-(acetyl)-sphing-4-enine. The enzyme catalyses 1-hexadecanoyl-2-(9Z,12Z-octadecadienoyl)-sn-glycero-3-phosphoethanolamine + N-(acetyl)-sphing-4-enine = 2-(9Z,12Z)-octadecadienoyl-sn-glycero-3-phosphoethanolamine + 1-hexadecanoyl-N-(acetyl)-sphing-4-enine. The catalysed reaction is 1-hexadecanoyl-2-(5Z,8Z,11Z,14Z-eicosatetraenoyl)-sn-glycero-3-phosphoethanolamine + N-(acetyl)-sphing-4-enine = 2-(5Z,8Z,11Z,14Z)-eicosatetraenoyl-sn-glycero-3-phosphoethanolamine + 1-hexadecanoyl-N-(acetyl)-sphing-4-enine. It catalyses the reaction N-(acetyl)-sphing-4-enine + a 1,2-diacyl-sn-glycero-3-phosphoethanolamine = 1-O-acyl-N-(acetyl)-sphing-4-enine + a 1-acyl-sn-glycero-3-phosphoethanolamine. It carries out the reaction 1-hexadecanoyl-2-(9Z-octadecenoyl)-sn-glycero-3-phosphoethanolamine + N-(acetyl)-sphing-4-enine = 1-(9Z-octadecenoyl)-N-(acetyl)-sphing-4-enine + 1-hexadecanoyl-sn-glycero-3-phosphoethanolamine. The enzyme catalyses 1-hexadecanoyl-2-(9Z,12Z-octadecadienoyl)-sn-glycero-3-phosphoethanolamine + N-(acetyl)-sphing-4-enine = 1-(9Z,12Z-octadecadienoyl)-N-acetylsphing-4-enine + 1-hexadecanoyl-sn-glycero-3-phosphoethanolamine. The catalysed reaction is 1-hexadecanoyl-2-(5Z,8Z,11Z,14Z-eicosatetraenoyl)-sn-glycero-3-phosphoethanolamine + N-(acetyl)-sphing-4-enine = 1-(5Z,8Z,11Z,14Z)-eicosatetraenoyl-N-(acetyl)-sphing-4-enine + 1-hexadecanoyl-sn-glycero-3-phosphoethanolamine. It catalyses the reaction N-(acetyl)-sphing-4-enine + a 1,2-diacyl-sn-glycero-3-phosphocholine = 1-O-acyl-N-(acetyl)-sphing-4-enine + a 1-acyl-sn-glycero-3-phosphocholine. It carries out the reaction 1-hexadecanoyl-2-(9Z-octadecenoyl)-sn-glycero-3-phosphocholine + N-(acetyl)-sphing-4-enine = 1-(9Z-octadecenoyl)-N-(acetyl)-sphing-4-enine + 1-hexadecanoyl-sn-glycero-3-phosphocholine. The enzyme catalyses 1-hexadecanoyl-2-(9Z,12Z-octadecadienoyl)-sn-glycero-3-phosphocholine + N-(acetyl)-sphing-4-enine = 1-(9Z,12Z-octadecadienoyl)-N-acetylsphing-4-enine + 1-hexadecanoyl-sn-glycero-3-phosphocholine. The catalysed reaction is 1-hexadecanoyl-2-(5Z,8Z,11Z,14Z-eicosatetraenoyl)-sn-glycero-3-phosphocholine + N-(acetyl)-sphing-4-enine = 1-(5Z,8Z,11Z,14Z)-eicosatetraenoyl-N-(acetyl)-sphing-4-enine + 1-hexadecanoyl-sn-glycero-3-phosphocholine. It catalyses the reaction 1-hexadecanoyl-2-(4Z,7Z,10Z,13Z,16Z,19Z-docosahexaenoyl)-sn-glycero-3-phosphocholine + N-(acetyl)-sphing-4-enine = 1-(4Z,7Z,10Z,13Z,16Z,19Z-docosahexaenoyl)-N-(acetyl)-sphing-4-enine + 1-hexadecanoyl-sn-glycero-3-phosphocholine. It carries out the reaction 1-octadecanoyl-2-(9Z-octadecenoyl)-sn-glycero-3-phosphocholine + N-(acetyl)-sphing-4-enine = 1-(9Z-octadecenoyl)-N-(acetyl)-sphing-4-enine + 1-octadecanoyl-sn-glycero-3-phosphocholine. The enzyme catalyses 1-octadecanoyl-2-(9Z,12Z)-octadecadienoyl-sn-glycero-3-phosphocholine + N-(acetyl)-sphing-4-enine = 1-(9Z,12Z-octadecadienoyl)-N-acetylsphing-4-enine + 1-octadecanoyl-sn-glycero-3-phosphocholine. The catalysed reaction is 1-octadecanoyl-2-(5Z,8Z,11Z,14Z-eicosatetraenoyl)-sn-glycero-3-phosphocholine + N-(acetyl)-sphing-4-enine = 1-(5Z,8Z,11Z,14Z)-eicosatetraenoyl-N-(acetyl)-sphing-4-enine + 1-octadecanoyl-sn-glycero-3-phosphocholine. It catalyses the reaction 1-(9Z-octadecenoyl)-2-hexadecanoyl-sn-glycero-3-phosphocholine + N-(acetyl)-sphing-4-enine = 1-hexadecanoyl-N-(acetyl)-sphing-4-enine + 1-(9Z-octadecenoyl)-sn-glycero-3-phosphocholine. It carries out the reaction 1-(9Z)-octadecenoyl-2-octadecanoyl-sn-glycero-3-phosphocholine + N-(acetyl)-sphing-4-enine = 1-octadecanoyl-N-(acetyl)-sphing-4-enine + 1-(9Z-octadecenoyl)-sn-glycero-3-phosphocholine. The enzyme catalyses 1,2-di-(9Z-octadecenoyl)-sn-glycero-3-phosphocholine + N-(acetyl)-sphing-4-enine = 1-(9Z-octadecenoyl)-N-(acetyl)-sphing-4-enine + 1-(9Z-octadecenoyl)-sn-glycero-3-phosphocholine. The catalysed reaction is N-(acetyl)-sphing-4-enine + a 1,2-diacyl-sn-glycero-3-phosphocholine = 1-O-acyl-N-(acetyl)-sphing-4-enine + a 2-acyl-sn-glycero-3-phosphocholine. It catalyses the reaction 1-hexadecanoyl-2-(9Z-octadecenoyl)-sn-glycero-3-phosphocholine + N-(acetyl)-sphing-4-enine = 1-hexadecanoyl-N-(acetyl)-sphing-4-enine + 2-(9Z-octadecenoyl)-sn-glycero-3-phosphocholine. It carries out the reaction 1-hexadecanoyl-2-(9Z,12Z-octadecadienoyl)-sn-glycero-3-phosphocholine + N-(acetyl)-sphing-4-enine = 2-(9Z,12Z-octadecadienoyl)-sn-glycero-3-phosphocholine + 1-hexadecanoyl-N-(acetyl)-sphing-4-enine. The enzyme catalyses 1-hexadecanoyl-2-(5Z,8Z,11Z,14Z-eicosatetraenoyl)-sn-glycero-3-phosphocholine + N-(acetyl)-sphing-4-enine = 1-hexadecanoyl-N-(acetyl)-sphing-4-enine + 2-(5Z,8Z,11Z,14Z)-eicosatetraenoyl-sn-glycero-3-phosphocholine. The catalysed reaction is 1-hexadecanoyl-2-(4Z,7Z,10Z,13Z,16Z,19Z-docosahexaenoyl)-sn-glycero-3-phosphocholine + N-(acetyl)-sphing-4-enine = 2-(4Z,7Z,10Z,13Z,16Z,19Z-docosahexaenoyl)-sn-glycero-3-phosphocholine + 1-hexadecanoyl-N-(acetyl)-sphing-4-enine. It catalyses the reaction 1-hexadecanoyl-2-nonadioyl-sn-glycero-3-phosphocholine + N-(acetyl)-sphing-4-enine = 2-nonadioyl-sn-glycero-3-phosphocholine + 1-hexadecanoyl-N-(acetyl)-sphing-4-enine. It carries out the reaction 1-octadecanoyl-2-(9Z-octadecenoyl)-sn-glycero-3-phosphocholine + N-(acetyl)-sphing-4-enine = 1-octadecanoyl-N-(acetyl)-sphing-4-enine + 2-(9Z-octadecenoyl)-sn-glycero-3-phosphocholine. The enzyme catalyses 1-octadecanoyl-2-(5Z,8Z,11Z,14Z-eicosatetraenoyl)-sn-glycero-3-phosphocholine + N-(acetyl)-sphing-4-enine = 1-octadecanoyl-N-(acetyl)-sphing-4-enine + 2-(5Z,8Z,11Z,14Z)-eicosatetraenoyl-sn-glycero-3-phosphocholine. The catalysed reaction is 1-(9Z-octadecenoyl)-2-hexadecanoyl-sn-glycero-3-phosphocholine + N-(acetyl)-sphing-4-enine = 1-(9Z-octadecenoyl)-N-(acetyl)-sphing-4-enine + 2-hexadecanoyl-sn-glycero-3-phosphocholine. It catalyses the reaction 1-(9Z)-octadecenoyl-2-octadecanoyl-sn-glycero-3-phosphocholine + N-(acetyl)-sphing-4-enine = 2-octadecanoyl-sn-glycero-3-phosphocholine + 1-(9Z-octadecenoyl)-N-(acetyl)-sphing-4-enine. It carries out the reaction a 1,2-diacyl-sn-glycero-3-phospho-L-serine + N-(acetyl)-sphing-4-enine = a 2-acyl-sn-glycero-3-phospho-L-serine + 1-O-acyl-N-(acetyl)-sphing-4-enine. The enzyme catalyses 1-octadecanoyl-2-(9Z-octadecenoyl)-sn-glycero-3-phospho-L-serine + N-(acetyl)-sphing-4-enine = 2-(9Z-octadecenoyl)-sn-glycero-3-phospho-L-serine + 1-octadecanoyl-N-(acetyl)-sphing-4-enine. The catalysed reaction is a 1,2-diacyl-sn-glycero-3-phospho-L-serine + N-(acetyl)-sphing-4-enine = 1-O-acyl-N-(acetyl)-sphing-4-enine + a 1-acyl-sn-glycero-3-phospho-L-serine. It catalyses the reaction 1-octadecanoyl-2-(9Z-octadecenoyl)-sn-glycero-3-phospho-L-serine + N-(acetyl)-sphing-4-enine = 1-octadecanoyl-sn-glycero-3-phosphoserine + 1-(9Z-octadecenoyl)-N-(acetyl)-sphing-4-enine. It carries out the reaction a 1,2-diacyl-sn-glycero-3-phospho-(1'-sn-glycerol) + N-(acetyl)-sphing-4-enine = 2-acyl-sn-glycero-3-phospho-(1'-sn-glycerol) + 1-O-acyl-N-(acetyl)-sphing-4-enine. The enzyme catalyses 1-octadecanoyl-2-(9Z-octadecenoyl)-sn-glycero-3-phospho-(1'-sn-glycerol) + N-(acetyl)-sphing-4-enine = 2-(9Z-octadecenoyl)-sn-glycero-3-phospho-(1'-sn-glycerol) + 1-octadecanoyl-N-(acetyl)-sphing-4-enine. The catalysed reaction is a 1,2-diacyl-sn-glycero-3-phospho-(1'-sn-glycerol) + N-(acetyl)-sphing-4-enine = 1-O-acyl-N-(acetyl)-sphing-4-enine + 1-acyl-sn-glycero-3-phospho-(1'-sn-glycerol). It catalyses the reaction 1-octadecanoyl-2-(9Z-octadecenoyl)-sn-glycero-3-phospho-(1'-sn-glycerol) + N-(acetyl)-sphing-4-enine = 1-octadecanoyl-sn-glycero-3-phospho-(1'-sn-glycerol) + 1-(9Z-octadecenoyl)-N-(acetyl)-sphing-4-enine. It carries out the reaction an N-acylethanolamine + a 1,2-diacyl-sn-glycero-3-phosphocholine = 2-(acylamino)ethyl fatty acid + a 2-acyl-sn-glycero-3-phosphocholine. The enzyme catalyses an N-acylethanolamine + a 1,2-diacyl-sn-glycero-3-phosphocholine = 2-(acylamino)ethyl fatty acid + a 1-acyl-sn-glycero-3-phosphocholine. The catalysed reaction is N-(5Z,8Z,11Z,14Z-eicosatetraenoyl)-ethanolamine + 1,2-di-(9Z-octadecenoyl)-sn-glycero-3-phosphocholine = 2-[(5Z,8Z,11Z,14Z)-eicosatetraenoylamino]ethyl (9Z)-octadecenoate + (9Z-octadecenoyl)-sn-glycero-3-phosphocholine. It catalyses the reaction N-(9Z-octadecenoyl) ethanolamine + 1,2-di-(9Z-octadecenoyl)-sn-glycero-3-phosphocholine = 2-[(9Z)-octadecenoylamino]ethyl (9Z)-octadecenoate + (9Z-octadecenoyl)-sn-glycero-3-phosphocholine. It carries out the reaction a 3-acyl-sn-glycerol + a 1,2-diacyl-sn-glycero-3-phosphocholine = a 1,3-diacylglycerol + a 1-acyl-sn-glycero-3-phosphocholine. The enzyme catalyses a 3-acyl-sn-glycerol + a 1,2-diacyl-sn-glycero-3-phosphocholine = a 1,3-diacylglycerol + a 2-acyl-sn-glycero-3-phosphocholine. The catalysed reaction is 3-(9Z-octadecenoyl)-sn-glycerol + 1,2-di-(9Z-octadecenoyl)-sn-glycero-3-phosphocholine = 1,3-di-(9Z-octadecenoyl)-glycerol + (9Z-octadecenoyl)-sn-glycero-3-phosphocholine. It catalyses the reaction 3-hexadecanoyl-sn-glycerol + 1,2-di-(9Z-octadecenoyl)-sn-glycero-3-phosphocholine = 1-(9Z)-octadecenoyl-3-hexadecanoyl-sn-glycerol + (9Z-octadecenoyl)-sn-glycero-3-phosphocholine. It carries out the reaction a 1-acyl-sn-glycerol + a 1,2-diacyl-sn-glycero-3-phosphocholine = a 1,3-diacylglycerol + a 2-acyl-sn-glycero-3-phosphocholine. The enzyme catalyses a 1-acyl-sn-glycerol + a 1,2-diacyl-sn-glycero-3-phosphocholine = a 1,3-diacylglycerol + a 1-acyl-sn-glycero-3-phosphocholine. The catalysed reaction is 1-(9Z-octadecenoyl)-sn-glycerol + 1,2-di-(9Z-octadecenoyl)-sn-glycero-3-phosphocholine = 1,3-di-(9Z-octadecenoyl)-glycerol + (9Z-octadecenoyl)-sn-glycero-3-phosphocholine. It catalyses the reaction 1-hexadecanoyl-sn-glycerol + 1,2-di-(9Z-octadecenoyl)-sn-glycero-3-phosphocholine = 1-hexadecanoyl-3-(9Z)-octadecenoyl-sn-glycerol + (9Z-octadecenoyl)-sn-glycero-3-phosphocholine. It carries out the reaction a 2-acylglycerol + a 1,2-diacyl-sn-glycero-3-phosphocholine = a 1,2-diacylglycerol + a 2-acyl-sn-glycero-3-phosphocholine. The enzyme catalyses a 2-acylglycerol + a 1,2-diacyl-sn-glycero-3-phosphocholine = a 1,2-diacylglycerol + a 1-acyl-sn-glycero-3-phosphocholine. The catalysed reaction is 2-hexadecanoylglycerol + 1,2-di-(9Z-octadecenoyl)-sn-glycero-3-phosphocholine = 1-(9Z)-octadecenoyl-2-hexadecanoylglycerol + (9Z-octadecenoyl)-sn-glycero-3-phosphocholine. It catalyses the reaction 1-O-alkylglycerol + a 1,2-diacyl-sn-glycero-3-phosphocholine = 1-O-alkyl-3-acylglycerol + a 1-acyl-sn-glycero-3-phosphocholine. It carries out the reaction 1-O-alkylglycerol + a 1,2-diacyl-sn-glycero-3-phosphocholine = 1-O-alkyl-3-acylglycerol + a 2-acyl-sn-glycero-3-phosphocholine. The enzyme catalyses 1-O-hexadecylglycerol + 1,2-di-(9Z-octadecenoyl)-sn-glycero-3-phosphocholine = 1-O-hexadecyl-3-(9Z)-octadecenoylglycerol + (9Z-octadecenoyl)-sn-glycero-3-phosphocholine. The catalysed reaction is 1-O-alkyl-2-acyl-sn-glycerol + a 1,2-diacyl-sn-glycero-3-phosphocholine = 1-O-alkyl-2,3-diacyl-sn-glycerol + a 2-acyl-sn-glycero-3-phosphocholine. It catalyses the reaction 1-O-alkyl-2-acyl-sn-glycerol + a 1,2-diacyl-sn-glycero-3-phosphocholine = 1-O-alkyl-2,3-diacyl-sn-glycerol + a 1-acyl-sn-glycero-3-phosphocholine. It carries out the reaction 1-O-hexadecyl-2-acetyl-sn-glycerol + 1,2-di-(9Z-octadecenoyl)-sn-glycero-3-phosphocholine = 1-O-hexadecyl-2-acetyl-3-(9Z)-octadecenoyl-sn-glycerol + (9Z-octadecenoyl)-sn-glycero-3-phosphocholine. The enzyme catalyses 1-O-hexadecyl-2-O-methyl-sn-glycerol + 1,2-di-(9Z-octadecenoyl)-sn-glycero-3-phosphocholine = 1-O-hexadecyl-2-O-methyl-3-(9Z)-octadecenoyl-sn-glycerol + (9Z-octadecenoyl)-sn-glycero-3-phosphocholine. The catalysed reaction is a 1,2-diacyl-sn-glycero-3-phosphoethanolamine + H2O = a 1-acyl-sn-glycero-3-phosphoethanolamine + a fatty acid + H(+). It catalyses the reaction 1-acyl-2-(5Z,8Z,11Z,14Z)-eicosatetraenoyl-sn-glycero-3-phosphoethanolamine + H2O = a 1-acyl-sn-glycero-3-phosphoethanolamine + (5Z,8Z,11Z,14Z)-eicosatetraenoate + H(+). It carries out the reaction a 1,2-diacyl-sn-glycero-3-phospho-(1'-sn-glycerol) + H2O = 1-acyl-sn-glycero-3-phospho-(1'-sn-glycerol) + a fatty acid + H(+). The enzyme catalyses 1-hexadecanoyl-2-(9Z-octadecenoyl)-sn-glycero-3-phospho-(1'-sn-glycerol) + H2O = 1-hexadecanoyl-sn-glycero-3-phospho-(1'-sn-glycerol) + (9Z)-octadecenoate + H(+). The catalysed reaction is a 1,2-diacyl-sn-glycero-3-phospho-(1'-sn-glycerol) + H2O = 2-acyl-sn-glycero-3-phospho-(1'-sn-glycerol) + a fatty acid + H(+). It catalyses the reaction 1-hexadecanoyl-2-(9Z-octadecenoyl)-sn-glycero-3-phospho-(1'-sn-glycerol) + H2O = 2-(9Z-octadecenoyl)-sn-glycero-3-phospho-(1'-sn-glycerol) + hexadecanoate + H(+). Inhibited by zinc ions at neutral pH. Zinc ions in plasma may keep the enzyme from hydrolyzing inappropriate substrates. In terms of biological role, has dual calcium-independent phospholipase and O-acyltransferase activities with a potential role in glycerophospholipid homeostasis and remodeling of acyl groups of lipophilic alcohols present in acidic cellular compartments. Catalyzes hydrolysis of the ester bond of the fatty acyl group attached at sn-1 or sn-2 position of phospholipids (phospholipase A1 or A2 activity) and transfer it to the hydroxyl group at the first carbon of lipophilic alcohols (O-acyltransferase activity). Among preferred fatty acyl donors are phosphatidylcholines, phosphatidylethanolamines, phosphatidylglycerols and phosphatidylserines. Favors sn-2 over sn-1 deacylation of unsaturated fatty acyl groups of phosphatidylcholines, phosphatidylethanolamines, and phosphatidylglycerols. Among preferred fatty acyl acceptors are natural lipophilic alcohols including short-chain ceramide N-acetyl-sphingosine (C2 ceramide), alkylacylglycerols, monoacylglycerols, and acylethanolamides such as anandamide and oleoylethanolamide. Selectively hydrolyzes the sn-1 fatty acyl group of truncated oxidized phospholipids and may play a role in detoxification of reactive oxidized phospholipids during oxidative stress. Required for normal phospholipid degradation in alveolar macrophages with potential implications in the clearance of pulmonary surfactant, which is mainly composed of dipalmitoylphosphatidylcholine (1,2-dihexadecanoyl-sn-glycero-3-phosphocholine). Involved in the first step of bis(monoacylglycero)phosphate (BMP) de novo synthesis from phosphatidylglycerol (1,2-diacyl-sn-glycero-3-phospho-(1'-sn-glycerol), PG). BMP is an important player in cargo sorting and degradation, regulation of cellular cholesterol levels and intercellular communication. At neutral pH, hydrolyzes the sn-1 fatty acyl group of the lysophosphatidylcholines. This is Lysosomal phospholipase A and acyltransferase from Homo sapiens (Human).